The following is a 255-amino-acid chain: Putative mediator of RNA polymerase II transcription subunit 30 (255 aa).

Low complexity predominate over residues 58–107; the sequence is QSQQLQQPQSIPSSTNNSTNTNTNNSTTTTTTSSTSSTTTPTTTTSTTSP. 2 disordered regions span residues 58-133 and 177-207; these read QSQQ…TLNL and NIDNDDTIMKDDNNNSSTSAPTTTTINIEKQ. Residues 108–133 are compositionally biased toward polar residues; it reads LNSKDSTATTTTKEQPSSPTLPTLNL. Basic and acidic residues predominate over residues 177–189; that stretch reads NIDNDDTIMKDDN. Low complexity predominate over residues 190–201; it reads NNSSTSAPTTTT.

It belongs to the Mediator complex subunit 30 family. Highly divergent. In terms of assembly, component of the Mediator complex.

It localises to the nucleus. In terms of biological role, component of the Mediator complex, a coactivator involved in the regulated transcription of nearly all RNA polymerase II-dependent genes. Mediator functions as a bridge to convey information from gene-specific regulatory proteins to the basal RNA polymerase II transcription machinery. Mediator is recruited to promoters by direct interactions with regulatory proteins and serves as a scaffold for the assembly of a functional preinitiation complex with RNA polymerase II and the general transcription factors. In Dictyostelium discoideum (Social amoeba), this protein is Putative mediator of RNA polymerase II transcription subunit 30 (med30).